A 905-amino-acid polypeptide reads, in one-letter code: Heme/hemopexin-binding protein (905 aa).

The signal sequence occupies residues 1 to 21 (MYKLNVISLIILTTYTGATYA).

The protein localises to the secreted. In terms of biological role, binds heme/hemopexin complexes. This chain is Heme/hemopexin-binding protein (hxuA), found in Haemophilus influenzae (strain ATCC 51907 / DSM 11121 / KW20 / Rd).